We begin with the raw amino-acid sequence, 376 residues long: Growth/differentiation factor 8 (376 aa).

The first 24 residues, 1 to 24 (MMQKLQMYVYIYLFMLIAAGPVDL), serve as a signal peptide directing secretion. The propeptide occupies 25–267 (NEGSEREENV…VTDTPKRSRR (243 aa)). Asparagine 72 is a glycosylation site (N-linked (GlcNAc...) asparagine). Intrachain disulfides connect cysteine 273–cysteine 283, cysteine 282–cysteine 341, cysteine 310–cysteine 373, and cysteine 314–cysteine 375.

This sequence belongs to the TGF-beta family. Homodimer; disulfide-linked. Interacts with WFIKKN2, leading to inhibit its activity. Interacts with FSTL3. Synthesized as large precursor molecule that undergoes proteolytic cleavage to generate an N-terminal propeptide and a disulfide linked C-terminal dimer, which is the biologically active molecule. The circulating form consists of a latent complex of the C-terminal dimer and other proteins, including its propeptide, which maintain the C-terminal dimer in a latent, inactive state. Ligand activation requires additional cleavage of the prodomain by a tolloid-like metalloproteinase. As to expression, expressed specifically in developing and adult skeletal muscle. Weak expression in adipose tissue.

It localises to the secreted. Functionally, acts specifically as a negative regulator of skeletal muscle growth. This Mus musculus (Mouse) protein is Growth/differentiation factor 8 (Mstn).